Here is a 111-residue protein sequence, read N- to C-terminus: Small ribosomal subunit protein bS16 (111 aa).

This sequence belongs to the bacterial ribosomal protein bS16 family.

The polypeptide is Small ribosomal subunit protein bS16 (Rickettsia bellii (strain OSU 85-389)).